A 179-amino-acid polypeptide reads, in one-letter code: UPF0227 protein VIBHAR_01524 (179 aa).

Belongs to the UPF0227 family.

This chain is UPF0227 protein VIBHAR_01524, found in Vibrio campbellii (strain ATCC BAA-1116).